Consider the following 219-residue polypeptide: Chalcone--flavanone isomerase (219 aa).

The substrate site is built by threonine 50, asparagine 115, and serine 192.

This sequence belongs to the chalcone isomerase family.

The enzyme catalyses a chalcone = a flavanone.. It participates in secondary metabolite biosynthesis; flavonoid biosynthesis. Catalyzes the intramolecular cyclization of bicyclic chalcones into tricyclic (S)-flavanones. Responsible for the isomerization of 4,2',4',6'-tetrahydroxychalcone (also termed chalcone) into naringenin. The chain is Chalcone--flavanone isomerase (CHI) from Pyrus communis (Pear).